The primary structure comprises 1707 residues: Latrophilin Cirl (1707 aa).

Over 1 to 767 the chain is Extracellular; sequence MLPTILSISY…LFTMFDGNMR (767 aa). Residues 25–114 enclose the SUEL-type lectin domain; that stretch reads ACEGKKLTIE…KYLEAHYQCI (90 aa). N-linked (GlcNAc...) asparagine glycosylation occurs at N142. The tract at residues 176–301 is disordered; sequence GLFNVPPQHT…TAASGAVVPG (126 aa). Polar residues-rich tracts occupy residues 185–198 and 256–265; these read TAVT…STTA and NATSPSNTRI. N256 is a glycosylation site (N-linked (GlcNAc...) asparagine). Residues 275 to 285 show a composition bias toward low complexity; sequence DDGTLLTTKSS. Residues N302, N341, N398, N655, N703, and N730 are each glycosylated (N-linked (GlcNAc...) asparagine). Residues 376–400 form a disordered region; sequence YDEYDDDPSSTTPAPNGGDCLHNSS. The region spanning 561 to 754 is the GAIN-B domain; that stretch reads RSVVQKVKNI…AILMDVVDEH (194 aa). Intrachain disulfides connect C709–C736 and C724–C738. The tract at residues 709-754 is GPS; it reads CVFWNYIDHAWSANGCSLESTNRTHSVCSCNHLTNFAILMDVVDEH. The chain crosses the membrane as a helical span at residues 768–788; it reads IFIYISIGICVVFIVIALLTL. At 789–801 the chain is on the cytoplasmic side; that stretch reads KLFNGVFVKSART. A helical membrane pass occupies residues 802 to 822; it reads SIYTSIYLCLLAIELLFLLGI. The Extracellular portion of the chain corresponds to 823-828; sequence EQTETS. Residues 829–849 traverse the membrane as a helical segment; sequence IFCGFITIFLHCAILSGTAWF. Over 850–875 the chain is Cytoplasmic; the sequence is CYEAFHSYSTLTSDELLLEVDQTPKV. Residues 876–896 form a helical membrane-spanning segment; the sequence is NCYYLLSYGLSLSVVAISLVI. Topologically, residues 897–920 are extracellular; that stretch reads DPSTYTQNDYCVLMEANALFYATF. Residues 921–941 form a helical membrane-spanning segment; the sequence is VIPVLVFFVAAIGYTFLSWII. The Cytoplasmic portion of the chain corresponds to 942–968; sequence LCRKSRTGLKTKEHTRLASVRFDIRCS. A helical transmembrane segment spans residues 969–989; that stretch reads FVFLLLLSAVWCSSYFYLRGA. Topologically, residues 990–999 are extracellular; that stretch reads KMDDDTADVY. A helical transmembrane segment spans residues 1000-1020; sequence GYCFICFNTLLGLYIFVFHCI. The Cytoplasmic portion of the chain corresponds to 1021–1707; that stretch reads QNEKIRREYR…VRCYLEPLAK (687 aa). Phosphoserine is present on S1156. Disordered regions lie at residues 1169 to 1188 and 1236 to 1260; these read AHKQ…GEGY and KPNS…SGSL. Over residues 1172–1181 the composition is skewed to low complexity; sequence QQQQQQQQQQ. Phosphoserine is present on residues S1255 and S1262. Residues 1316–1326 show a composition bias toward low complexity; the sequence is QQLHQQQQQQL. 4 disordered regions span residues 1316–1335, 1450–1538, 1563–1582, and 1612–1687; these read QQLH…QVEQ, GGGS…SDER, APLD…EHNG, and GGRL…QQRH. Residues S1327 and S1328 each carry the phosphoserine modification. A compositionally biased stretch (low complexity) spans 1456–1481; it reads GGSVSSRSQQQQLKKQQQQQSLAQQR. Composition is skewed to acidic residues over residues 1489–1503 and 1513–1526; these read DDDD…EEAT and CDED…DLED. Positions 1635–1650 are enriched in polar residues; sequence QTPAQKRQQLQKLSPQ. Low complexity predominate over residues 1651–1673; sequence STTSSSSHTSHSNPNPHPLQLTH. Basic residues predominate over residues 1674 to 1686; sequence PHPHQHPPHHQQR.

The protein belongs to the G-protein coupled receptor 2 family. LN-TM7 subfamily. As to quaternary structure, forms a heterodimer, consisting of a large extracellular region non-covalently linked to a seven-transmembrane moiety. Post-translationally, proteolytically cleaved into 2 subunits, an extracellular subunit and a seven-transmembrane subunit.

The protein localises to the cell membrane. The polypeptide is Latrophilin Cirl (Drosophila yakuba (Fruit fly)).